The primary structure comprises 157 residues: Endoribonuclease YbeY (157 aa).

Positions 111, 115, and 121 each coordinate Zn(2+).

This sequence belongs to the endoribonuclease YbeY family. It depends on Zn(2+) as a cofactor.

Its subcellular location is the cytoplasm. Functionally, single strand-specific metallo-endoribonuclease involved in late-stage 70S ribosome quality control and in maturation of the 3' terminus of the 16S rRNA. The protein is Endoribonuclease YbeY of Pseudomonas putida (strain W619).